A 414-amino-acid polypeptide reads, in one-letter code: Seminal vesicle secretory protein 2 (414 aa).

Residues 1-22 form the signal peptide; sequence MKSSVFILSLFLLLERQAAVVG. Glutamine 23 bears the Pyrrolidone carboxylic acid mark. Repeat copies occupy residues 108–120, 127–139, 140–152, 153–165, 166–178, 179–191, 192–204, 205–217, 224–236, 237–249, 257–269, 275–287, and 299–311. The interval 108–311 is 13 X 13 AA tandem repeats; the sequence is ESQIKSFRQV…LKSFGQQKSL (204 aa). Disordered regions lie at residues 170–228, 240–294, and 306–369; these read KSYG…GQMK, AKSF…SFSQ, and GQQK…FGQE. The span at 240-259 shows a compositional bias: polar residues; sequence AKSFGQVKSQSGQMKSSYGQ. Low complexity predominate over residues 277 to 294; it reads QLKSYGQQKSQKQSSFSQ. Polar residues-rich tracts occupy residues 306–321 and 342–351; these read GQQK…TQQK and SVQQKSTQQM. The segment covering 358-369 has biased composition (low complexity); the sequence is SQFGQQRQFGQE.

The repeating unit appears to be involved in the formation of the copulatory plug via a transglutaminase reaction cross-linking glutamine and lysine residues.

In terms of biological role, the rat seminal vesicle contains six major androgen-dependent secretory proteins referred to as SVS I-VI. The SVS I-III proteins appear to be components of the rat copulatory plug, with the SVS II protein being the major component. This chain is Seminal vesicle secretory protein 2 (Svs2), found in Rattus norvegicus (Rat).